Reading from the N-terminus, the 43-residue chain is Protein PsbN (43 aa).

A helical transmembrane segment spans residues 5–27 (TIFSIFFSCLLIGLTGYSLYTSF).

It belongs to the PsbN family.

The protein localises to the plastid. It is found in the chloroplast thylakoid membrane. May play a role in photosystem I and II biogenesis. This chain is Protein PsbN, found in Mesostigma viride (Green alga).